The primary structure comprises 175 residues: Cyclic pyranopterin monophosphate synthase (175 aa).

Substrate is bound by residues 78–80 (LCH) and 125–126 (ME). The active site involves Asp140.

The protein belongs to the MoaC family. In terms of assembly, homohexamer; trimer of dimers.

It carries out the reaction (8S)-3',8-cyclo-7,8-dihydroguanosine 5'-triphosphate = cyclic pyranopterin phosphate + diphosphate. It participates in cofactor biosynthesis; molybdopterin biosynthesis. Catalyzes the conversion of (8S)-3',8-cyclo-7,8-dihydroguanosine 5'-triphosphate to cyclic pyranopterin monophosphate (cPMP). This chain is Cyclic pyranopterin monophosphate synthase, found in Rhodopirellula baltica (strain DSM 10527 / NCIMB 13988 / SH1).